The primary structure comprises 355 residues: 4-dimethylallyltryptophan N-methyltransferase easF (355 aa).

It belongs to the methyltransferase superfamily. In terms of assembly, homodimer.

It catalyses the reaction 4-(3-methylbut-2-enyl)-L-tryptophan + S-adenosyl-L-methionine = 4-(3-methylbut-2-enyl)-L-abrine + S-adenosyl-L-homocysteine + H(+). It functions in the pathway alkaloid biosynthesis; ergot alkaloid biosynthesis. Functionally, 4-dimethylallyltryptophan N-methyltransferase; part of the gene cluster that mediates the biosynthesis of fungal ergot alkaloid. DmaW catalyzes the first step of ergot alkaloid biosynthesis by condensing dimethylallyl diphosphate (DMAP) and tryptophan to form 4-dimethylallyl-L-tryptophan. The second step is catalyzed by the methyltransferase easF that methylates 4-dimethylallyl-L-tryptophan in the presence of S-adenosyl-L-methionine, resulting in the formation of 4-dimethylallyl-L-abrine. The catalase easC and the FAD-dependent oxidoreductase easE then transform 4-dimethylallyl-L-abrine to chanoclavine-I which is further oxidized by easD in the presence of NAD(+), resulting in the formation of chanoclavine-I aldehyde. Agroclavine dehydrogenase easG then mediates the conversion of chanoclavine-I aldehyde to agroclavine via a non-enzymatic adduct reaction: the substrate is an iminium intermediate that is formed spontaneously from chanoclavine-I aldehyde in the presence of glutathione. Further conversion of agroclavine to paspalic acid is a two-step process involving oxidation of agroclavine to elymoclavine and of elymoclavine to paspalic acid, the second step being performed by the elymoclavine oxidase cloA. However, cloA does not encode a functional enzyme indicating that C.fusiformis terminates its ergot alkaloid pathway at elymoclavine. The protein is 4-dimethylallyltryptophan N-methyltransferase easF of Claviceps fusiformis (Ergot fungus).